The primary structure comprises 88 residues: Large ribosomal subunit protein bL31B (88 aa).

Belongs to the bacterial ribosomal protein bL31 family. Type B subfamily. In terms of assembly, part of the 50S ribosomal subunit.

This Leuconostoc citreum (strain KM20) protein is Large ribosomal subunit protein bL31B.